An 860-amino-acid chain; its full sequence is Pentatricopeptide repeat-containing protein At2g40720 (860 aa).

20 PPR repeats span residues 59 to 93 (SVFTFPSLLKACSALTNLSYGKTIHGSVVVLGWRY), 94 to 124 (DPFIATSLVNMYVKCGFLDYAVQVFDGWSQS), 132 to 166 (DVTVWNSMIDGYFKFRRFKEGVGCFRRMLVFGVRP), 167 to 203 (DAFSLSIVVSVMCKEGNFRREEGKQIHGFMLRNSLDT), 204 to 234 (DSFLKTALIDMYFKFGLSIDAWRVFVEIEDK), 236 to 270 (NVVLWNVMIVGFGGSGICESSLDLYMLAKNNSVKL), 271 to 305 (VSTSFTGALGACSQSENSGFGRQIHCDVVKMGLHN), 306 to 340 (DPYVCTSLLSMYSKCGMVGEAETVFSCVVDKRLEI), 341 to 371 (WNAMVAAYAENDYGYSALDLFGFMRQKSVLP), 372 to 406 (DSFTLSNVISCCSVLGLYNYGKSVHAELFKRPIQS), 407 to 437 (TSTIESALLTLYSKCGCDPDAYLVFKSMEEK), 438 to 472 (DMVAWGSLISGLCKNGKFKEALKVFGDMKDDDDSL), 475 to 509 (DSDIMTSVTNACAGLEALRFGLQVHGSMIKTGLVL), 510 to 540 (NVFVGSSLIDLYSKCGLPEMALKVFTSMSTE), 541 to 575 (NMVAWNSMISCYSRNNLPELSIDLFNLMLSQGIFP), 576 to 610 (DSVSITSVLVAISSTASLLKGKSLHGYTLRLGIPS), 611 to 641 (DTHLKNALIDMYVKCGFSKYAENIFKKMQHK), 642 to 676 (SLITWNLMIYGYGSHGDCITALSLFDEMKKAGESP), 677 to 707 (DDVTFLSLISACNHSGFVEEGKNIFEFMKQD), and 713 to 743 (NMEHYANMVDLLGRAGLLEEAYSFIKAMPIE). The segment at 748–823 (IWLCLLSASR…QPGCSWIEVS (76 aa)) is type E motif. A type E(+) motif region spans residues 824 to 854 (DRTNVFFSGGSSSPMKAEIFNVLNRLKSNMV).

This sequence belongs to the PPR family. PCMP-E subfamily.

The sequence is that of Pentatricopeptide repeat-containing protein At2g40720 (PCMP-E26) from Arabidopsis thaliana (Mouse-ear cress).